A 152-amino-acid chain; its full sequence is Large-conductance mechanosensitive channel (152 aa).

The next 3 helical transmembrane spans lie at 14–34, 39–59, and 85–105; these read VVDM…VKSL, LMPG…FLVI, and GLFI…FLVI.

This sequence belongs to the MscL family. Homopentamer.

It is found in the cell inner membrane. Channel that opens in response to stretch forces in the membrane lipid bilayer. May participate in the regulation of osmotic pressure changes within the cell. This Syntrophus aciditrophicus (strain SB) protein is Large-conductance mechanosensitive channel.